The chain runs to 135 residues: Large ribosomal subunit protein mL41A (135 aa).

The transit peptide at Met-1 to Arg-13 directs the protein to the mitochondrion.

The protein belongs to the mitochondrion-specific ribosomal protein mL41 family. In terms of assembly, component of the mitochondrial ribosome large subunit (39S) which comprises a 16S rRNA and about 50 distinct proteins.

It localises to the mitochondrion. Its function is as follows. Component of the mitochondrial ribosome large subunit. Also involved in apoptosis and cell cycle. In Xenopus laevis (African clawed frog), this protein is Large ribosomal subunit protein mL41A (mrpl41-a).